A 348-amino-acid polypeptide reads, in one-letter code: Outer membrane protein assembly factor BamC (348 aa).

Positions 1–19 are cleaved as a signal peptide; sequence MKYSHQLVIGSLAVFVLTA. Cys20 carries the N-palmitoyl cysteine lipid modification. Cys20 is lipidated: S-diacylglycerol cysteine.

The protein belongs to the BamC family. Part of the Bam complex.

It is found in the cell outer membrane. In terms of biological role, part of the outer membrane protein assembly complex, which is involved in assembly and insertion of beta-barrel proteins into the outer membrane. The chain is Outer membrane protein assembly factor BamC from Vibrio atlanticus (strain LGP32) (Vibrio splendidus (strain Mel32)).